The chain runs to 955 residues: MDIEDKTSKMHCMKGKHVVIICGVVIAVGLILGLGLGLGLDTKACNPPEVNGQVSTKSPISNTPDVTSPSGSSVFCSAKNDENGPWTHFRLPNYVHPVHYDLHLTPEMEAEVYTGMVNISIRLEEQTTKHLWLHLRETKITEMPQLWTSSGQVIEIKRCFGYEPQEYVVIEAEEDLRPSNYFLSMRFKGYLNGSLVGFYSTTYGENGKIKYIAATDHEPTDARKSFPCFDEPNKKATYTISITHEHDYEAISNMPVEKTISLDNKWTKTIFKKSVPMSTYLVAWAVHQFKYEERISSRGIPLRIYAQPQQINTAIYAANVTKVVFDYFENYFNMNYSLPKLDKIAIPDFGTGAMENWGLITYRETNLLYDSQESAASNKQRVAAVIAHELVHQWFGNIVTMDWWDDLWLNEGFASFFEFMGVNAKEEKWQMLDQILISDLLPVLKEDSLVSSHPITVNVSSPDEITSVFDGISYSKGASILRMLEDWISPECFRAGCEKYLKEHYFKNAKTDDFWKAMEEVSGKPVKEVMDTWTRQMGYPVLKVDLNSTVTQQRFLLDPKADPSKPSSQFSYKWNIPVKWKEGNTSNIIFYNKSELAGITITRPSDLPLNSFLKVNKDHVGFYRVNYEPQVWRALTDIMMKDHQNFNLADRAGFIDDAFALARAGLLKYADALNLTRYLQNEAEYIPWQRAVVAISYIRNMFEDDKALYPKFQRYFGSLVKPIASELKWEXDEDHIKSLLRTTVLEFACKMEDPEALGNASLLFKKWMSGISLDVNLRLLVYRFGMQNSGDEQAWNYMFQKYRTATLAQEKEKLLYGLASVKNITLLNRFLSCIKNTSLIRSQDVFTVLGYISLNSYGKTMAWDWVRLNWEYLVKRYTLNDRNLGRLISRLSGTFNTELQLWQMENFFERYPDAGAGEASRKQALETTKSNIEWLKQYRDDVATWLENSEHSNFA.

Residues 1–17 are Cytoplasmic-facing; it reads MDIEDKTSKMHCMKGKH. A helical; Signal-anchor for type II membrane protein transmembrane segment spans residues 18–38; that stretch reads VVIICGVVIAVGLILGLGLGL. At 39-955 the chain is on the extracellular side; that stretch reads GLDTKACNPP…LENSEHSNFA (917 aa). 2 N-linked (GlcNAc...) asparagine glycosylation sites follow: N118 and N192. E218 contributes to the substrate binding site. 2 N-linked (GlcNAc...) asparagine glycosylation sites follow: N319 and N335. 352–356 contributes to the substrate binding site; that stretch reads GAMEN. H388 is a Zn(2+) binding site. E389 acts as the Proton acceptor in catalysis. Positions 392 and 411 each coordinate Zn(2+). Residues N458, N547, N584, N592, N674, N759, N823, and N836 are each glycosylated (N-linked (GlcNAc...) asparagine). R882 lines the substrate pocket.

Belongs to the peptidase M1 family. Homodimer; disulfide-linked. Zn(2+) serves as cofactor. N-glycosylated. Glycosylation counts for an increased mass of about 32% of the protein mass (about 48 kDa).

Its subcellular location is the cell membrane. The enzyme catalyses Release of N-terminal glutamate (and to a lesser extent aspartate) from a peptide.. Substrate specificity is modulated by calcium which enhances the enzymatic activity for cleavage of acidic residues while reducing its activity with neutral and basic residues. Hydrolytic activity is inhibited by the aminopeptidase inhibitor (Leu and acidic inhibitor) amastatin, but not by bestatin (aminopeptidase inhibitor Leu inhibitor), leupeptin, pepstatin A and PMSF. Its hydrolytic activity is also strongly reduced by zinc ions, with a complete inhibition at 0.5 mM, and moderately inhibited by cobalt and copper ions. Its function is as follows. Venom protein that cleaves N-terminal acidic residues from peptides with high potency in presence of calcium. It may have several roles in venom including alteration of blood pressure by cleaving circulating angiotensin-2, general degradation of host tissue, increase of permeability to other venom components, and/or processing of other toxins in the venom. The sequence is that of Glutamyl aminopeptidase from Bitis rhinoceros (West African gaboon viper).